Consider the following 45-residue polypeptide: Large ribosomal subunit protein bL34 (45 aa).

Belongs to the bacterial ribosomal protein bL34 family.

The protein is Large ribosomal subunit protein bL34 of Acidothermus cellulolyticus (strain ATCC 43068 / DSM 8971 / 11B).